Reading from the N-terminus, the 285-residue chain is Bifunctional protein FolD (285 aa).

NADP(+) is bound by residues 166 to 168 (GAS) and I232.

Belongs to the tetrahydrofolate dehydrogenase/cyclohydrolase family. In terms of assembly, homodimer.

The enzyme catalyses (6R)-5,10-methylene-5,6,7,8-tetrahydrofolate + NADP(+) = (6R)-5,10-methenyltetrahydrofolate + NADPH. It catalyses the reaction (6R)-5,10-methenyltetrahydrofolate + H2O = (6R)-10-formyltetrahydrofolate + H(+). Its pathway is one-carbon metabolism; tetrahydrofolate interconversion. In terms of biological role, catalyzes the oxidation of 5,10-methylenetetrahydrofolate to 5,10-methenyltetrahydrofolate and then the hydrolysis of 5,10-methenyltetrahydrofolate to 10-formyltetrahydrofolate. The chain is Bifunctional protein FolD from Photobacterium profundum (strain SS9).